The primary structure comprises 810 residues: Hemoglobin-haptoglobin utilization protein B (810 aa).

The signal sequence occupies residues 1 to 22; the sequence is MPIPFKPVLAAAAIAQAFPAFA. The TBDR plug domain maps to 34–166; that stretch reads NEITVTGTHK…LGGAVNYQTK (133 aa). A TBDR beta-barrel domain is found at 175–810; it reads DKPYHLGIKG…SYNFTIEAKF (636 aa). The TonB C-terminal box motif lies at 793 to 810; sequence QRFTSPGRSYNFTIEAKF.

The protein belongs to the TonB-dependent receptor family.

The protein localises to the cell outer membrane. In terms of biological role, acts as a receptor for hemoglobin or the hemoglobin/haptoglobin complex and is required for heme uptake. The sequence is that of Hemoglobin-haptoglobin utilization protein B (hpuB) from Neisseria meningitidis serogroup A / serotype 4A (strain DSM 15465 / Z2491).